The following is a 232-amino-acid chain: Enterobactin synthase component D (232 aa).

D106, E108, and E150 together coordinate Mg(2+).

The protein belongs to the P-Pant transferase superfamily. EntD family. As to quaternary structure, entB, EntD, EntE, and EntF form a multienzyme complex called enterobactin synthase. Mg(2+) serves as cofactor.

Its subcellular location is the membrane. It carries out the reaction apo-[aryl-carrier protein] + CoA = holo-[aryl-carrier protein] + adenosine 3',5'-bisphosphate + H(+). The enzyme catalyses apo-[peptidyl-carrier protein] + CoA = holo-[peptidyl-carrier protein] + adenosine 3',5'-bisphosphate + H(+). It functions in the pathway siderophore biosynthesis; enterobactin biosynthesis. In terms of biological role, involved in the biosynthesis of the siderophore enterobactin (enterochelin), which is a macrocyclic trimeric lactone of N-(2,3-dihydroxybenzoyl)-serine. The serine trilactone serves as a scaffolding for the three catechol functionalities that provide hexadentate coordination for the tightly ligated iron(2+) atoms. Plays an essential role in the assembly of the enterobactin by catalyzing the transfer of the 4'-phosphopantetheine (Ppant) moiety from coenzyme A to the apo-domains of both EntB (ArCP domain) and EntF (PCP domain) to yield their holo-forms which make them competent for the activation of 2,3-dihydroxybenzoate (DHB) and L-serine, respectively. The protein is Enterobactin synthase component D of Salmonella austin.